We begin with the raw amino-acid sequence, 538 residues long: Phosphoenolpyruvate carboxykinase (ATP) (538 aa).

3 residues coordinate substrate: arginine 64, tyrosine 205, and lysine 211. Residues lysine 211, histidine 230, and 246 to 254 contribute to the ATP site; that span reads GLSGTGKTT. Mn(2+) is bound by residues lysine 211 and histidine 230. Aspartate 267 provides a ligand contact to Mn(2+). ATP-binding positions include glutamate 295, arginine 331, 447-448, and threonine 453; that span reads RI. Position 331 (arginine 331) interacts with substrate.

The protein belongs to the phosphoenolpyruvate carboxykinase (ATP) family. As to quaternary structure, monomer. Mn(2+) serves as cofactor.

It localises to the cytoplasm. The catalysed reaction is oxaloacetate + ATP = phosphoenolpyruvate + ADP + CO2. The protein operates within carbohydrate biosynthesis; gluconeogenesis. In terms of biological role, involved in the gluconeogenesis. Catalyzes the conversion of oxaloacetate (OAA) to phosphoenolpyruvate (PEP) through direct phosphoryl transfer between the nucleoside triphosphate and OAA. The polypeptide is Phosphoenolpyruvate carboxykinase (ATP) (Mannheimia succiniciproducens (strain KCTC 0769BP / MBEL55E)).